The following is a 283-amino-acid chain: TIMELESS-interacting protein (283 aa).

A disordered region spans residues 1 to 68 (MAMIDPLENN…SSSAARKAVK (68 aa)). Residues 15-24 (PDYENTEDET) are compositionally biased toward acidic residues. Positions 74-150 (LDANRLVSER…KEVQTCLKRI (77 aa)) are interaction with TIMELESS. 2 disordered regions span residues 186–205 (GNVG…EQQQ) and 217–238 (RRQA…PSYP).

The protein belongs to the CSM3 family. As to quaternary structure, interacts with TIMELESS, which impairs TIMELESS self-association.

The protein resides in the cytoplasm. It is found in the nucleus. Functionally, plays an important role in the control of DNA replication and the maintenance of replication fork stability. Important for cell survival after DNA damage or replication stress. May be required for the replication checkpoint induced by hydroxyurea or ultraviolet light. This is TIMELESS-interacting protein (TIPIN) from Gallus gallus (Chicken).